The following is a 201-amino-acid chain: Imidazoleglycerol-phosphate dehydratase (201 aa).

It belongs to the imidazoleglycerol-phosphate dehydratase family.

Its subcellular location is the cytoplasm. The enzyme catalyses D-erythro-1-(imidazol-4-yl)glycerol 3-phosphate = 3-(imidazol-4-yl)-2-oxopropyl phosphate + H2O. It functions in the pathway amino-acid biosynthesis; L-histidine biosynthesis; L-histidine from 5-phospho-alpha-D-ribose 1-diphosphate: step 6/9. The protein is Imidazoleglycerol-phosphate dehydratase of Prochlorococcus marinus (strain MIT 9301).